The sequence spans 123 residues: MTKLKCKSLRGEKKDALQKKLDEQKTELATLRVSKVTGGAASKLSKIRVVRKNIARLLTVINQTQKQELRKFYADHKYKPIDLRLKKTRAIRRRLTAHELSLRSAKQQAKSRNQAVRKFAVKA.

Belongs to the universal ribosomal protein uL29 family.

In Caenorhabditis elegans, this protein is Large ribosomal subunit protein uL29 (rpl-35).